A 311-amino-acid polypeptide reads, in one-letter code: UPF0324 membrane protein VV1_3166 (311 aa).

Helical transmembrane passes span 8-28 (FIFA…ALVL), 51-71 (LLSY…AIAV), 74-94 (DGIG…FLVA), 106-126 (LISA…APAI), 133-153 (IALA…IFPV), 165-185 (FGTW…AASA), 197-217 (LKLA…ILFA), 228-248 (LVLP…DLFP), 256-276 (GIFS…GCSI), and 289-309 (LIFG…WLLL).

It belongs to the UPF0324 family.

Its subcellular location is the cell membrane. The protein is UPF0324 membrane protein VV1_3166 of Vibrio vulnificus (strain CMCP6).